The following is a 536-amino-acid chain: Glycine-rich extracellular protein 1 (536 aa).

The first 22 residues, 1–22 (MGAWAFPAALFLLCLTSESLQG), serve as a signal peptide directing secretion. Disordered regions lie at residues 111-134 (AQNG…TTQN), 306-336 (GAGE…NGPW), and 500-536 (GDEY…LGKC). The span at 115 to 124 (FGPGFGGGGK) shows a compositional bias: gly residues. Positions 521–536 (GQLGNGYGGRCPLGKC) are enriched in gly residues.

This chain is Glycine-rich extracellular protein 1, found in Homo sapiens (Human).